The sequence spans 152 residues: Acidic phospholipase A2 1 (152 aa).

A signal peptide spans 1–19 (MNPAYFLVLAAVCVSLLGA). The propeptide occupies 20 to 27 (ANIPPQPL). Disulfide bonds link cysteine 38-cysteine 104, cysteine 54-cysteine 151, cysteine 56-cysteine 72, cysteine 71-cysteine 132, cysteine 78-cysteine 125, cysteine 88-cysteine 118, and cysteine 111-cysteine 123. Ca(2+) contacts are provided by tyrosine 55, glycine 57, and glycine 59. The active site involves histidine 75. Aspartate 76 is a Ca(2+) binding site. The active site involves aspartate 126.

It belongs to the phospholipase A2 family. Group I subfamily. D49 sub-subfamily. Ca(2+) is required as a cofactor. In terms of tissue distribution, expressed by the venom gland.

Its subcellular location is the secreted. It carries out the reaction a 1,2-diacyl-sn-glycero-3-phosphocholine + H2O = a 1-acyl-sn-glycero-3-phosphocholine + a fatty acid + H(+). Functionally, PLA2 catalyzes the calcium-dependent hydrolysis of the 2-acyl groups in 3-sn-phosphoglycerides. The sequence is that of Acidic phospholipase A2 1 from Bungarus candidus (Malayan krait).